Consider the following 392-residue polypeptide: Cell division protein DivIB (392 aa).

Positions Met-1–Asn-88 are disordered. Over Met-1–Met-131 the chain is Cytoplasmic. Over residues Lys-14–Ala-32 the composition is skewed to basic and acidic residues. Residues Thr-58–Asn-76 are compositionally biased toward acidic residues. A helical transmembrane segment spans residues Trp-132 to Leu-152. In terms of domain architecture, POTRA spans Ser-153–His-224. Over Ser-153–Asn-392 the chain is Extracellular. The interval Ile-368–Asn-392 is disordered.

It belongs to the FtsQ/DivIB family. DivIB subfamily.

The protein resides in the cell membrane. Its function is as follows. Cell division protein that may be involved in stabilizing or promoting the assembly of the division complex. The chain is Cell division protein DivIB from Lactococcus lactis subsp. lactis (strain KF147).